Here is a 342-residue protein sequence, read N- to C-terminus: Ribosomal RNA small subunit methyltransferase H (342 aa).

S-adenosyl-L-methionine is bound by residues 36 to 38 (GGH), Asp-56, Phe-82, Asp-100, and Gln-107. Positions 309–342 (ENRESGMGKGHGAAASRFPTPDSRFPTSPNGDAP) are disordered. A compositionally biased stretch (polar residues) spans 333–342 (FPTSPNGDAP).

This sequence belongs to the methyltransferase superfamily. RsmH family.

The protein localises to the cytoplasm. The enzyme catalyses cytidine(1402) in 16S rRNA + S-adenosyl-L-methionine = N(4)-methylcytidine(1402) in 16S rRNA + S-adenosyl-L-homocysteine + H(+). Specifically methylates the N4 position of cytidine in position 1402 (C1402) of 16S rRNA. The chain is Ribosomal RNA small subunit methyltransferase H from Xanthomonas campestris pv. campestris (strain B100).